The chain runs to 108 residues: Ig kappa chain V region K-25 (108 aa).

Residues 1-23 (AVELTQTPASVEAAVGGTVTIKC) are framework-1. Positions 24 to 34 (QASQBIYSYLS) are complementarity-determining-1. The tract at residues 35–49 (WYQQKPGQPPKLLIY) is framework-2. The segment at 50–56 (KASTLAS) is complementarity-determining-2. The tract at residues 57-88 (GVSSRFKGSGSGTEFTLTISDLZCADAATYYC) is framework-3. Residues 89-97 (QTYSYSSTY) are complementarity-determining-3. The tract at residues 98–107 (FGGGTEVVVK) is framework-4.

This Oryctolagus cuniculus (Rabbit) protein is Ig kappa chain V region K-25.